The primary structure comprises 450 residues: Bifunctional apoptosis regulator (450 aa).

The tract at residues methionine 1–glycine 24 is disordered. Over methionine 1–arginine 140 the chain is Cytoplasmic. The RING-type zinc finger occupies cysteine 34–arginine 74. A helical membrane pass occupies residues glycine 141–valine 161. The Extracellular portion of the chain corresponds to tyrosine 162–glutamate 331. Residues tryptophan 182–leucine 249 enclose the SAM domain. Asparagine 232 carries N-linked (GlcNAc...) asparagine glycosylation. Residues phenylalanine 332–leucine 352 form a helical membrane-spanning segment. Topologically, residues glutamate 353–arginine 360 are cytoplasmic. The helical transmembrane segment at phenylalanine 361–tryptophan 381 threads the bilayer. Over serine 382–glycine 404 the chain is Extracellular. A helical transmembrane segment spans residues leucine 405 to tryptophan 425. Topologically, residues alanine 426–phenylalanine 450 are cytoplasmic.

Interacts with CASP8, BCL2 and BCL2L1 through SAM domain and also with HIP1, IFT57, ESRRBL1 and BCAP31. Interacts with NGFR; this interaction inhibits NF-kappa-B and JNK-related signaling pathways. Post-translationally, mediates RING-dependent self-ubiquitination leading to proteasomal degradation.

The protein resides in the endoplasmic reticulum membrane. The enzyme catalyses S-ubiquitinyl-[E2 ubiquitin-conjugating enzyme]-L-cysteine + [acceptor protein]-L-lysine = [E2 ubiquitin-conjugating enzyme]-L-cysteine + N(6)-ubiquitinyl-[acceptor protein]-L-lysine.. In terms of biological role, membrane-bound E3 ubiquitin ligase that plays a role in several processes including apoptosis regulation or reticulum endoplasmic stress. Has anti-apoptotic activity, both for apoptosis triggered via death-receptors and via mitochondrial factors. Contributes to the dynamic control of IRE1/ERN1 signaling during ER stress by inducing BAX inhibitor 1/TMBIM6 proteasomal degradation. Promotes the activation of TGF-beta signaling by mediating the 'Lys-63'-linked ubiquitination of TGFBR1 which is critical to activate the pathway. Together with NGFR, negatively regulates NF-kappa-B and JNK-related signaling pathways. Promotes the proteasome-mediated degradation of PNPLA3, a protein involveld in lipid metabolism. The sequence is that of Bifunctional apoptosis regulator (Bfar) from Rattus norvegicus (Rat).